We begin with the raw amino-acid sequence, 102 residues long: Large ribosomal subunit protein uL24 (102 aa).

Belongs to the universal ribosomal protein uL24 family. As to quaternary structure, part of the 50S ribosomal subunit.

Functionally, one of two assembly initiator proteins, it binds directly to the 5'-end of the 23S rRNA, where it nucleates assembly of the 50S subunit. Its function is as follows. One of the proteins that surrounds the polypeptide exit tunnel on the outside of the subunit. The polypeptide is Large ribosomal subunit protein uL24 (Rhizobium johnstonii (strain DSM 114642 / LMG 32736 / 3841) (Rhizobium leguminosarum bv. viciae)).